Here is a 465-residue protein sequence, read N- to C-terminus: Fumarate hydratase class II (465 aa).

Substrate is bound by residues 100–102 (SGT), 131–134 (HPND), 141–143 (SSN), and T189. Catalysis depends on H190, which acts as the Proton donor/acceptor. S320 is a catalytic residue. Substrate contacts are provided by residues S321 and 326 to 328 (KVN).

Belongs to the class-II fumarase/aspartase family. Fumarase subfamily. Homotetramer.

It localises to the cytoplasm. It catalyses the reaction (S)-malate = fumarate + H2O. It participates in carbohydrate metabolism; tricarboxylic acid cycle; (S)-malate from fumarate: step 1/1. Its function is as follows. Involved in the TCA cycle. Catalyzes the stereospecific interconversion of fumarate to L-malate. The protein is Fumarate hydratase class II of Mesorhizobium japonicum (strain LMG 29417 / CECT 9101 / MAFF 303099) (Mesorhizobium loti (strain MAFF 303099)).